Reading from the N-terminus, the 258-residue chain is Chaperone protein caf1M (258 aa).

The N-terminal stretch at 1–20 is a signal peptide; it reads MILNRLSTLGIITFGMLSFA. Cys121 and Cys160 are oxidised to a cystine.

Belongs to the periplasmic pilus chaperone family.

It localises to the periplasm. Has a stimulatory role for the envelope antigen F1 secretion. It seems to interact with the subunit polypeptide and to prevent it from digestion by a protease. In Yersinia pestis, this protein is Chaperone protein caf1M (caf1M).